Consider the following 345-residue polypeptide: Sesquiterpene synthase GALMADRAFT_104215 (345 aa).

Mg(2+)-binding residues include Asp-91, Asn-226, Ser-230, and Glu-234. Positions 91-95 (DEFTD) match the DDXXD motif motif. 2 residues coordinate (2E,6E)-farnesyl diphosphate: Arg-316 and Tyr-317.

The protein belongs to the terpene synthase family. Mg(2+) is required as a cofactor.

The enzyme catalyses (2E,6E)-farnesyl diphosphate = beta-gurjunene + diphosphate. Its function is as follows. Terpene cyclase that catalyzes the cyclization of farnesyl diphosphate (FPP) to beta-gurjunene. In Galerina marginata (strain CBS 339.88), this protein is Sesquiterpene synthase GALMADRAFT_104215.